Reading from the N-terminus, the 473-residue chain is Phenolic acid decarboxylase (473 aa).

Positions 160, 182, and 224 each coordinate Mn(2+). Prenylated FMN-binding positions include 160-165 (NVGIYR) and 181-182 (QH). E273 acts as the Proton donor in catalysis.

Belongs to the UbiD family. YclC subfamily. Prenylated FMN is required as a cofactor. Mn(2+) serves as cofactor.

The catalysed reaction is 4-hydroxybenzoate + H(+) = phenol + CO2. It catalyses the reaction vanillate + H(+) = guaiacol + CO2. In terms of biological role, involved in the non-oxidative decarboxylation and detoxification of phenolic derivatives under both aerobic and anaerobic conditions. Phenolic acid decarboxylase that catalyzes the reversible decarboxylation of 4-hydroxybenzoate and vanillate. Could also catalyze the decarboxylation of salicylate. Is not active on di- and tri-hydroxybenzoate derivatives. The protein is Phenolic acid decarboxylase of Bacillus subtilis (strain 168).